Here is a 283-residue protein sequence, read N- to C-terminus: Thymidylate synthase (283 aa).

Arginine 22 provides a ligand contact to dUMP. The Nucleophile role is filled by cysteine 160. DUMP is bound by residues 180 to 183, asparagine 191, and 221 to 223; these read RSCD and HIY. (6R)-5,10-methylene-5,6,7,8-tetrahydrofolate is bound at residue aspartate 183. Residue serine 282 coordinates (6R)-5,10-methylene-5,6,7,8-tetrahydrofolate.

Belongs to the thymidylate synthase family. Bacterial-type ThyA subfamily. Homodimer.

The protein resides in the cytoplasm. The enzyme catalyses dUMP + (6R)-5,10-methylene-5,6,7,8-tetrahydrofolate = 7,8-dihydrofolate + dTMP. The protein operates within pyrimidine metabolism; dTTP biosynthesis. Catalyzes the reductive methylation of 2'-deoxyuridine-5'-monophosphate (dUMP) to 2'-deoxythymidine-5'-monophosphate (dTMP) while utilizing 5,10-methylenetetrahydrofolate (mTHF) as the methyl donor and reductant in the reaction, yielding dihydrofolate (DHF) as a by-product. This enzymatic reaction provides an intracellular de novo source of dTMP, an essential precursor for DNA biosynthesis. This chain is Thymidylate synthase, found in Vibrio vulnificus (strain CMCP6).